Here is a 1167-residue protein sequence, read N- to C-terminus: MPRRTDIKSILIIGAGPIVIGQACEFDYSGTQACKALKEEGFRVILVNSNPATIMTDPELADATYIEPITPEVVAKIIAKERPDALLPTMGGQTALNTALSLRRMGVLDRYNVEMIGADATAIDKAEDRALFREAMSKIGLETPKSMLANATDVKNADRKTHEAERAALKAEKPDNLDAELDALETRWNLGEGDRKQRYISHAMAIAAQALDHVGLPAIIRPSFTMGGTGGGIAYNRAEFYDIVQSGLDASPTTEVLIEESVLGWKEYEMEVVRDKADNCIIVCSIENIDPMGVHTGDSITVAPALTLTDKEYQMMRNASIAVLREIGVETGGSNVQFAVNPADGRLVVIEMNPRVSRSSALASKATGFPIAKIAAKLAVGYTLDELENDITGGATPASFEPSIDYVVTKIPRFAFEKFPGAEPVLTTAMKSVGEVMAIGRTFQESLQKALRGLETGLTGLDEIEIPGLGHGATVANHADDRNAIRAALGTPTPDRLRMVAQAIRMGTSLEDVHAMCKIDPWFLEQIAGILAMEARIREHGIPQDAVNLRMLKAMGFSDARLASLTRTDAEVVTKIREKLDVHPVYKRIDTCAAEFASPTAYMYSTYEVPFAGALANEAQVSSRKKVVILGGGPNRIGQGIEFDYCCCHAAFALRDAGYEAIMINCNPETVSTDYDTSDRLYFDPLTAEDVLEILRAEQASGELLGVIVQFGGQTPLKLADALEKAGIPILGTSPDMIDLAEDRDRFQKLLHKLGLSQPKNGIAYSVEQARLVAGELGFPLVVRPSYVLGGRAMQIIHDESMLQSYLLDTVPGLVPEDIKQKYPNDKTGQINTLLGKNPLLFDTYLSGAIEVDVDCLCDGKATFVSGILEHIEEAGIHSGDSACSLPVHSLPSELVDELERQTAALARALNVGGLMNVQYAIKDGTVYVLEVNPRASRTVPFVAKTIGRPIAKIAARIMAGETLEDAFAHYGAMPDPRNPGHIAVKEAVFPFARFPGVDILLGPEMRSTGEVMGLDRDFALAFAKSQLGAGVDLPRSGTLFVSVRDEDKKGILPAVKRLAGLGFKVLATSGTQRFLAENGVVAEKINKVLEGRPHIEDAIRNRQVQIVFNTTDGQKAVSDSKSLRRATLMQKVPYYTTLSGAAAVAEAIAALKAGSLEVRPLQEYFA.

Residues methionine 1 to glutamate 455 form a carboxyphosphate synthetic domain region. ATP contacts are provided by arginine 129, arginine 221, glycine 227, glycine 228, glutamate 260, valine 262, glutamate 267, glycine 293, valine 294, histidine 295, glutamine 337, and glutamate 351. Residues leucine 184 to valine 380 form the ATP-grasp 1 domain. Mg(2+)-binding residues include glutamine 337, glutamate 351, and asparagine 353. Positions 337, 351, and 353 each coordinate Mn(2+). The segment at threonine 456–alanine 619 is oligomerization domain. The segment at glutamine 620 to glycine 1031 is carbamoyl phosphate synthetic domain. An ATP-grasp 2 domain is found at glutamine 748 to alanine 960. 10 residues coordinate ATP: arginine 784, threonine 844, leucine 846, glutamate 851, glycine 876, isoleucine 877, histidine 878, serine 879, glutamine 919, and glutamate 931. The Mg(2+) site is built by glutamine 919, glutamate 931, and asparagine 933. Residues glutamine 919, glutamate 931, and asparagine 933 each contribute to the Mn(2+) site. The 136-residue stretch at valine 1032 to alanine 1167 folds into the MGS-like domain. Residues valine 1032–alanine 1167 form an allosteric domain region.

The protein belongs to the CarB family. As to quaternary structure, composed of two chains; the small (or glutamine) chain promotes the hydrolysis of glutamine to ammonia, which is used by the large (or ammonia) chain to synthesize carbamoyl phosphate. Tetramer of heterodimers (alpha,beta)4. It depends on Mg(2+) as a cofactor. The cofactor is Mn(2+).

It carries out the reaction hydrogencarbonate + L-glutamine + 2 ATP + H2O = carbamoyl phosphate + L-glutamate + 2 ADP + phosphate + 2 H(+). The enzyme catalyses hydrogencarbonate + NH4(+) + 2 ATP = carbamoyl phosphate + 2 ADP + phosphate + 2 H(+). The protein operates within amino-acid biosynthesis; L-arginine biosynthesis; carbamoyl phosphate from bicarbonate: step 1/1. Its pathway is pyrimidine metabolism; UMP biosynthesis via de novo pathway; (S)-dihydroorotate from bicarbonate: step 1/3. Functionally, large subunit of the glutamine-dependent carbamoyl phosphate synthetase (CPSase). CPSase catalyzes the formation of carbamoyl phosphate from the ammonia moiety of glutamine, carbonate, and phosphate donated by ATP, constituting the first step of 2 biosynthetic pathways, one leading to arginine and/or urea and the other to pyrimidine nucleotides. The large subunit (synthetase) binds the substrates ammonia (free or transferred from glutamine from the small subunit), hydrogencarbonate and ATP and carries out an ATP-coupled ligase reaction, activating hydrogencarbonate by forming carboxy phosphate which reacts with ammonia to form carbamoyl phosphate. This is Carbamoyl phosphate synthase large chain from Mesorhizobium japonicum (strain LMG 29417 / CECT 9101 / MAFF 303099) (Mesorhizobium loti (strain MAFF 303099)).